Here is a 623-residue protein sequence, read N- to C-terminus: tRNA uridine 5-carboxymethylaminomethyl modification enzyme MnmG (623 aa).

Residues 11-16 (GAGHAG), valine 123, and serine 178 each bind FAD. 270–284 (GPRYCPSIETKIVTF) lines the NAD(+) pocket. Glutamine 367 is an FAD binding site.

It belongs to the MnmG family. In terms of assembly, homodimer. Heterotetramer of two MnmE and two MnmG subunits. FAD serves as cofactor.

Its subcellular location is the cytoplasm. Its function is as follows. NAD-binding protein involved in the addition of a carboxymethylaminomethyl (cmnm) group at the wobble position (U34) of certain tRNAs, forming tRNA-cmnm(5)s(2)U34. This chain is tRNA uridine 5-carboxymethylaminomethyl modification enzyme MnmG, found in Phocaeicola vulgatus (strain ATCC 8482 / DSM 1447 / JCM 5826 / CCUG 4940 / NBRC 14291 / NCTC 11154) (Bacteroides vulgatus).